A 161-amino-acid polypeptide reads, in one-letter code: Thy-1 membrane glycoprotein (161 aa).

The signal sequence occupies residues 1–19 (MNLAISIALLLTVLQVSRG). Gln20 carries the post-translational modification Pyrrolidone carboxylic acid. The Ig-like V-type domain occupies 20-126 (QKVTSLTACL…SQNVTVLRDK (107 aa)). 2 disulfides stabilise this stretch: Cys28/Cys130 and Cys38/Cys104. N-linked (GlcNAc...) asparagine glycosylation is found at Asn42 and Asn79. Ser82 is modified (phosphoserine). Asn119 carries an N-linked (GlcNAc...) asparagine glycan. Cys130 carries GPI-anchor amidated cysteine; alternate lipidation. Positions 131–161 (EGISLLAQNTSWLLLLLLSLSLLQATDFMSL) are cleaved as a propeptide — removed in mature form. N-linked (GlcNAc...) asparagine glycosylation is present at Asn139.

It is found in the cell membrane. May play a role in cell-cell or cell-ligand interactions during synaptogenesis and other events in the brain. This Homo sapiens (Human) protein is Thy-1 membrane glycoprotein (THY1).